Here is a 148-residue protein sequence, read N- to C-terminus: Azurin (148 aa).

An N-terminal signal peptide occupies residues 1–20; the sequence is MLRKLAAVSLLSLLSAPLLA. The Plastocyanin-like domain occupies 21–148; the sequence is AECSVDIQGN…ALMKGTLTLK (128 aa). A disulfide bridge links C23 with C46. The Cu cation site is built by H66, C132, H137, and M141.

It is found in the periplasm. In terms of biological role, transfers electrons from cytochrome c551 to cytochrome oxidase. The polypeptide is Azurin (azu) (Pseudomonas aeruginosa (strain ATCC 15692 / DSM 22644 / CIP 104116 / JCM 14847 / LMG 12228 / 1C / PRS 101 / PAO1)).